The following is a 525-amino-acid chain: Coronin-2A (525 aa).

7 WD repeats span residues 24–71 (NCYD…TGKL), 72–122 (DPHY…RNLT), 123–170 (AYRK…SVIT), 171–214 (SPMS…AGTV), 215–259 (LQEA…DNLS), 260–305 (VPLM…ADKP), and 306–342 (HLSYLTEYRSYNPQKGIGVMPKRGLDVSSCEIFRFYK). Positions 485-524 (QMFYRQQEEIRRLRELLTQREVQAKQLELEIKNLRMGSEQ) form a coiled coil.

This sequence belongs to the WD repeat coronin family. Binds actin. Component of the N-Cor repressor complex, at least composed of NCOR1, NCOR2, HDAC3, TBL1X, TBL1R, CORO2A and GPS2.

The protein is Coronin-2A (CORO2A) of Homo sapiens (Human).